Consider the following 308-residue polypeptide: Energy-coupling factor transporter ATP-binding protein EcfA2 (308 aa).

Residues 3 to 263 form the ABC transporter domain; sequence IEVKNISKVF…VDFLRENEME (261 aa). 40–47 is an ATP binding site; it reads GPTGSGKT.

This sequence belongs to the ABC transporter superfamily. Energy-coupling factor EcfA family. In terms of assembly, forms a stable energy-coupling factor (ECF) transporter complex composed of 2 membrane-embedded substrate-binding proteins (S component), 2 ATP-binding proteins (A component) and 2 transmembrane proteins (T component).

It localises to the cell membrane. Its function is as follows. ATP-binding (A) component of a common energy-coupling factor (ECF) ABC-transporter complex. Unlike classic ABC transporters this ECF transporter provides the energy necessary to transport a number of different substrates. The protein is Energy-coupling factor transporter ATP-binding protein EcfA2 of Mycoplasma mobile (strain ATCC 43663 / 163K / NCTC 11711) (Mesomycoplasma mobile).